Consider the following 159-residue polypeptide: uncharacterized protein (159 aa).

The disordered stretch occupies residues 9-36 (VTSGNKEKKKKRSSAGLTGHAPPAADSS).

This is an uncharacterized protein from Caenorhabditis elegans.